Consider the following 470-residue polypeptide: Glutamyl-tRNA reductase (470 aa).

Residues 49 to 52, S109, 114 to 116, and Q120 contribute to the substrate site; these read TCNR and ESQ. C50 serves as the catalytic Nucleophile. 223–228 serves as a coordination point for NADP(+); it reads GAGAVG.

This sequence belongs to the glutamyl-tRNA reductase family. Homodimer.

It carries out the reaction (S)-4-amino-5-oxopentanoate + tRNA(Glu) + NADP(+) = L-glutamyl-tRNA(Glu) + NADPH + H(+). Its pathway is porphyrin-containing compound metabolism; protoporphyrin-IX biosynthesis; 5-aminolevulinate from L-glutamyl-tRNA(Glu): step 1/2. Functionally, catalyzes the NADPH-dependent reduction of glutamyl-tRNA(Glu) to glutamate 1-semialdehyde (GSA). This is Glutamyl-tRNA reductase from Frankia alni (strain DSM 45986 / CECT 9034 / ACN14a).